The following is a 214-amino-acid chain: Probable nicotinate-nucleotide adenylyltransferase (214 aa).

It belongs to the NadD family.

It catalyses the reaction nicotinate beta-D-ribonucleotide + ATP + H(+) = deamido-NAD(+) + diphosphate. It participates in cofactor biosynthesis; NAD(+) biosynthesis; deamido-NAD(+) from nicotinate D-ribonucleotide: step 1/1. Functionally, catalyzes the reversible adenylation of nicotinate mononucleotide (NaMN) to nicotinic acid adenine dinucleotide (NaAD). This chain is Probable nicotinate-nucleotide adenylyltransferase, found in Rhodopirellula baltica (strain DSM 10527 / NCIMB 13988 / SH1).